Consider the following 83-residue polypeptide: Large ribosomal subunit protein eL14 (83 aa).

The protein belongs to the eukaryotic ribosomal protein eL14 family.

The protein is Large ribosomal subunit protein eL14 of Thermococcus gammatolerans (strain DSM 15229 / JCM 11827 / EJ3).